An 843-amino-acid chain; its full sequence is Speckle targeted PIP5K1A-regulated poly(A) polymerase (843 aa).

Residues 25 to 55 (FRCLLCGVNIPNRPSLTDHLSGRRHVRLHEE) form a Matrin-type zinc finger. The 73-residue stretch at 54–126 (EERDKRNQQQ…ALEEPQIKLS (73 aa)) folds into the RRM domain. A compositionally biased stretch (basic residues) spans 134 to 146 (PREKKEFQRKKGG). The interval 134–157 (PREKKEFQRKKGGSPRTLQPPDPE) is disordered. Residue Ser215 coordinates ATP. Positions 226 and 228 each coordinate Mg(2+). Residues Asp226 and Asp228 each contribute to the UTP site. A compositionally biased stretch (basic and acidic residues) spans 241-255 (VEGKAEKEIQNREES). The tract at residues 241–292 (VEGKAEKEIQNREESSTDMEVSMEDPETERKEEEMEIGNSKNDEDEDVTPGL) is disordered. Asn354 lines the ATP pocket. 4 residues coordinate UTP: Asn354, Arg376, Tyr398, and His516. The PAP-associated domain occupies 456 to 516 (SLSSLLSEFF…NIQDPFELSH (61 aa)). The KA1; binds the bulging loops of U6 snRNA but is dispensable for terminal uridylyltransferase activity stretch occupies residues 564-837 (PPTERECVGR…YLPRMVAQIQ (274 aa)). Positions 653-691 (QNNTKEASKQKSIFKTEEGMTESARRKREMTEPCMSDMT) are disordered. Over residues 658–670 (EASKQKSIFKTEE) the composition is skewed to basic and acidic residues.

The protein belongs to the DNA polymerase type-B-like family. As to quaternary structure, associates with the cleavage and polyadenylation specificity factor (CPSF) complex. Mg(2+) serves as cofactor. Requires Mn(2+) as cofactor.

It localises to the nucleus. The protein resides in the nucleolus. It is found in the nucleus speckle. The enzyme catalyses RNA(n) + UTP = RNA(n)-3'-uridine ribonucleotide + diphosphate. The catalysed reaction is RNA(n) + ATP = RNA(n)-3'-adenine ribonucleotide + diphosphate. Functionally, poly(A) polymerase that creates the 3'-poly(A) tail of specific pre-mRNAs. In addition to polyadenylation, it is also required for the 3'-end cleavage of pre-mRNAs: binds to the 3'UTR of targeted pre-mRNAs and promotes the recruitment and assembly of the CPSF complex on the 3'UTR of pre-mRNAs. In addition to adenylyltransferase activity, also has uridylyltransferase activity. However, the ATP ratio is higher than UTP in cells, suggesting that it functions primarily as a poly(A) polymerase. This Xenopus tropicalis (Western clawed frog) protein is Speckle targeted PIP5K1A-regulated poly(A) polymerase (tut1).